The following is a 93-amino-acid chain: Integration host factor subunit beta (93 aa).

It belongs to the bacterial histone-like protein family. Heterodimer of an alpha and a beta chain.

Functionally, this protein is one of the two subunits of integration host factor, a specific DNA-binding protein that functions in genetic recombination as well as in transcriptional and translational control. The protein is Integration host factor subunit beta of Aliivibrio salmonicida (strain LFI1238) (Vibrio salmonicida (strain LFI1238)).